Here is a 499-residue protein sequence, read N- to C-terminus: Probable lipid II flippase MurJ (499 aa).

14 consecutive transmembrane segments (helical) span residues 4-24 (LFRA…FGYV), 26-46 (DATV…FIAF), 88-108 (LLIT…EEII), 130-150 (FTIL…ILLV), 154-174 (FFVP…SLVI), 184-204 (LALA…FLLF), 227-247 (FLFT…DTFL), 265-285 (IYLL…LALV), 297-317 (TALK…FFLS), 335-355 (LFYT…YSLQ), 375-395 (AFLS…LLNF), 396-416 (GVYS…VYLY), 425-445 (IPFG…GLVY), and 455-475 (FILV…LIIL).

This sequence belongs to the MurJ/MviN family.

Its subcellular location is the cell inner membrane. Its pathway is cell wall biogenesis; peptidoglycan biosynthesis. In terms of biological role, involved in peptidoglycan biosynthesis. Transports lipid-linked peptidoglycan precursors from the inner to the outer leaflet of the cytoplasmic membrane. The protein is Probable lipid II flippase MurJ of Aquifex aeolicus (strain VF5).